The following is a 431-amino-acid chain: Protein SHQ1 homolog (431 aa).

The protein belongs to the SHQ1 family.

In terms of biological role, required for the quantitative accumulation of H/ACA ribonucleoproteins (RNPs). In Caenorhabditis elegans, this protein is Protein SHQ1 homolog.